The chain runs to 780 residues: Kazrin (780 aa).

A coiled-coil region spans residues 79 to 261; that stretch reads AQVLLREEVV…LATLTKDVPK (183 aa). Positions 295–430 are disordered; that stretch reads QQTLYHSHPP…TRHSLSLSEG (136 aa). Serine 357, serine 372, and serine 392 each carry phosphoserine. A compositionally biased stretch (polar residues) spans 416-427; that stretch reads SQCSPTRHSLSL. 3 SAM domains span residues 451-516, 529-593, and 617-684; these read WKAG…YRDA, DHHW…LYQV, and WTNQ…STVF. The disordered stretch occupies residues 692–780; the sequence is IRESERFGTP…EYSSLEVTNV (89 aa). Basic and acidic residues predominate over residues 760–771; sequence LQGRPEQCRLEE.

This sequence belongs to the kazrin family.

It is found in the cell junction. It localises to the nucleus. The protein resides in the cytoplasm. Its subcellular location is the cytoskeleton. Its function is as follows. Component of the cornified envelope of keratinocytes. May be involved in the interplay between adherens junctions and desmosomes. The function in the nucleus is not known. This chain is Kazrin (Kazn), found in Rattus norvegicus (Rat).